Reading from the N-terminus, the 292-residue chain is 33 kDa chaperonin (292 aa).

Cystine bridges form between Cys230-Cys232 and Cys263-Cys266.

Belongs to the HSP33 family. Post-translationally, under oxidizing conditions two disulfide bonds are formed involving the reactive cysteines. Under reducing conditions zinc is bound to the reactive cysteines and the protein is inactive.

Its subcellular location is the cytoplasm. Functionally, redox regulated molecular chaperone. Protects both thermally unfolding and oxidatively damaged proteins from irreversible aggregation. Plays an important role in the bacterial defense system toward oxidative stress. The polypeptide is 33 kDa chaperonin (Shigella dysenteriae serotype 1 (strain Sd197)).